The chain runs to 614 residues: Sodium- and chloride-dependent betaine transporter (614 aa).

The Cytoplasmic portion of the chain corresponds to 1 to 44; that stretch reads MDGKVAVQECGPPAVSWVPEEGEKLDQEDEDQVKDRGQWTNKME. 3 helical membrane passes run 45-65, 73-92, and 117-137; these read FVLS…FPYL, AFFI…VFFL, and GIGL…IIIL. Over 138–210 the chain is Extracellular; the sequence is AWALFYLFSS…SGIHDLGSLR (73 aa). An intrachain disulfide couples C157 to C166. 2 N-linked (GlcNAc...) asparagine glycosylation sites follow: N171 and N183. The next 9 helical transmembrane spans lie at 211–229, 238–255, 291–308, 320–341, 374–393, 423–441, 458–478, 499–518, and 538–556; these read WELA…FCIW, VVYF…ILLI, IFFS…LGSY, IALC…FSIL, MPLS…FLGL, LLIL…FLVT, GICL…VYGA, ISWL…FSLS, and IGWF…FVVI. The Cytoplasmic portion of the chain corresponds to 557–614; the sequence is TLLKTRGPFRKRLRQLITPDSSLPQPKQHPCLDGSAGRNFGPSPTREGLIAGEKETHL. The tract at residues 576-614 is disordered; that stretch reads DSSLPQPKQHPCLDGSAGRNFGPSPTREGLIAGEKETHL.

This sequence belongs to the sodium:neurotransmitter symporter (SNF) (TC 2.A.22) family. SLC6A12 subfamily. As to quaternary structure, interacts with LIN7C. Expressed in kidney, liver, heart, skeletal muscle, placenta, and a widespread distribution in the brain.

It is found in the basolateral cell membrane. The protein localises to the cell membrane. It catalyses the reaction 4-aminobutanoate(out) + chloride(out) + 3 Na(+)(out) = 4-aminobutanoate(in) + chloride(in) + 3 Na(+)(in). The enzyme catalyses glycine betaine(out) + 2 chloride(out) + 3 Na(+)(out) = glycine betaine(in) + 2 chloride(in) + 3 Na(+)(in). Transporter that mediates cellular uptake of betaine and GABA in a sodium- and chloride-dependent process. May have a role in regulation of GABAergic transmission in the brain through the reuptake of GABA into presynaptic terminals, as well as in osmotic regulation. Probably also involved in renal and hepatic osmotic regulation. This chain is Sodium- and chloride-dependent betaine transporter, found in Homo sapiens (Human).